Reading from the N-terminus, the 270-residue chain is Very long chain fatty acid elongase 3 (270 aa).

N-linked (GlcNAc...) asparagine glycosylation is present at Asn6. 2 helical membrane passes run 29–49 (FFEE…VLIA) and 63–83 (LQGP…LGAV). A glycan (N-linked (GlcNAc...) asparagine) is linked at Asn110. 5 consecutive transmembrane segments (helical) span residues 115 to 135 (FWSW…AFII), 140 to 160 (PLIF…SFGY), 164 to 184 (VPAG…MYTY), 198 to 218 (LPML…IVSI), and 235 to 255 (HLFW…HFFC). A Di-lysine motif motif is present at residues 266-270 (KTKSQ).

The protein belongs to the ELO family. ELOVL3 subfamily. As to quaternary structure, interacts with TECR. Post-translationally, N-Glycosylated. In terms of tissue distribution, testis.

It is found in the endoplasmic reticulum membrane. It carries out the reaction a very-long-chain acyl-CoA + malonyl-CoA + H(+) = a very-long-chain 3-oxoacyl-CoA + CO2 + CoA. The enzyme catalyses eicosanoyl-CoA + malonyl-CoA + H(+) = 3-oxodocosanoyl-CoA + CO2 + CoA. The catalysed reaction is hexadecanoyl-CoA + malonyl-CoA + H(+) = 3-oxooctadecanoyl-CoA + CO2 + CoA. It catalyses the reaction octadecanoyl-CoA + malonyl-CoA + H(+) = 3-oxoeicosanoyl-CoA + CO2 + CoA. It carries out the reaction (9Z)-octadecenoyl-CoA + malonyl-CoA + H(+) = 3-oxo-(11Z)-eicosenoyl-CoA + CO2 + CoA. The enzyme catalyses (9Z,12Z)-octadecadienoyl-CoA + malonyl-CoA + H(+) = (11Z,14Z)-3-oxoicosa-11,14-dienoyl-CoA + CO2 + CoA. The catalysed reaction is (9Z,12Z,15Z)-octadecatrienoyl-CoA + malonyl-CoA + H(+) = (11Z,14Z,17Z)-3-oxoeicosatrienoyl-CoA + CO2 + CoA. It catalyses the reaction docosanoyl-CoA + malonyl-CoA + H(+) = 3-oxotetracosanoyl-CoA + CO2 + CoA. It carries out the reaction tetradecanoyl-CoA + malonyl-CoA + H(+) = 3-oxohexadecanoyl-CoA + CO2 + CoA. It participates in lipid metabolism; polyunsaturated fatty acid biosynthesis. Catalyzes the first and rate-limiting reaction of the four reactions that constitute the long-chain fatty acids elongation cycle. This endoplasmic reticulum-bound enzymatic process allows the addition of 2 carbons to the chain of long- and very long-chain fatty acids (VLCFAs) per cycle. Condensing enzyme that exhibits activity toward saturated and unsaturated acyl-CoA substrates with higher activity toward C18 acyl-CoAs, especially C18:0 acyl-CoAs. May participate in the production of saturated and monounsaturated VLCFAs of different chain lengths that are involved in multiple biological processes as precursors of membrane lipids and lipid mediators. The chain is Very long chain fatty acid elongase 3 from Homo sapiens (Human).